A 379-amino-acid polypeptide reads, in one-letter code: UDP-4-amino-4-deoxy-L-arabinose--oxoglutarate aminotransferase (379 aa).

K182 is subject to N6-(pyridoxal phosphate)lysine.

Belongs to the DegT/DnrJ/EryC1 family. ArnB subfamily. In terms of assembly, homodimer. Requires pyridoxal 5'-phosphate as cofactor.

The enzyme catalyses UDP-4-amino-4-deoxy-beta-L-arabinose + 2-oxoglutarate = UDP-beta-L-threo-pentopyranos-4-ulose + L-glutamate. It functions in the pathway nucleotide-sugar biosynthesis; UDP-4-deoxy-4-formamido-beta-L-arabinose biosynthesis; UDP-4-deoxy-4-formamido-beta-L-arabinose from UDP-alpha-D-glucuronate: step 2/3. The protein operates within bacterial outer membrane biogenesis; lipopolysaccharide biosynthesis. Its function is as follows. Catalyzes the conversion of UDP-4-keto-arabinose (UDP-Ara4O) to UDP-4-amino-4-deoxy-L-arabinose (UDP-L-Ara4N). The modified arabinose is attached to lipid A and is required for resistance to polymyxin and cationic antimicrobial peptides. This Erwinia tasmaniensis (strain DSM 17950 / CFBP 7177 / CIP 109463 / NCPPB 4357 / Et1/99) protein is UDP-4-amino-4-deoxy-L-arabinose--oxoglutarate aminotransferase.